A 469-amino-acid polypeptide reads, in one-letter code: Glutamate--tRNA ligase (469 aa).

Residues P11 to N21 carry the 'HIGH' region motif. A compositionally biased stretch (basic and acidic residues) spans Q114 to P131. Positions Q114 to P139 are disordered. The 'KMSKS' region signature appears at K243–R247. K246 is an ATP binding site.

Belongs to the class-I aminoacyl-tRNA synthetase family. Glutamate--tRNA ligase type 1 subfamily. Monomer.

The protein resides in the cytoplasm. It carries out the reaction tRNA(Glu) + L-glutamate + ATP = L-glutamyl-tRNA(Glu) + AMP + diphosphate. Functionally, catalyzes the attachment of glutamate to tRNA(Glu) in a two-step reaction: glutamate is first activated by ATP to form Glu-AMP and then transferred to the acceptor end of tRNA(Glu). This Paraburkholderia phytofirmans (strain DSM 17436 / LMG 22146 / PsJN) (Burkholderia phytofirmans) protein is Glutamate--tRNA ligase.